An 80-amino-acid chain; its full sequence is Conotoxin Bu3 (80 aa).

The signal sequence occupies residues 1–22 (MKLMCVLIVSVLVLTACQLSTA). A propeptide spanning residues 23–51 (DDTRDKQKDRLVRLFRKKRDSSDSGLLPR) is cleaved from the precursor. 3 disulfide bridges follow: Cys-53–Cys-69, Cys-60–Cys-72, and Cys-68–Cys-79.

This sequence belongs to the conotoxin O1 superfamily. In terms of tissue distribution, expressed by the venom duct.

The protein resides in the secreted. This chain is Conotoxin Bu3, found in Conus bullatus (Bubble cone).